Reading from the N-terminus, the 203-residue chain is Ribosomal RNA large subunit methyltransferase E (203 aa).

The S-adenosyl-L-methionine site is built by Gly59, Trp61, Asp79, Asn95, and Asp118. Lys158 serves as the catalytic Proton acceptor.

This sequence belongs to the class I-like SAM-binding methyltransferase superfamily. RNA methyltransferase RlmE family.

It is found in the cytoplasm. The enzyme catalyses uridine(2552) in 23S rRNA + S-adenosyl-L-methionine = 2'-O-methyluridine(2552) in 23S rRNA + S-adenosyl-L-homocysteine + H(+). Specifically methylates the uridine in position 2552 of 23S rRNA at the 2'-O position of the ribose in the fully assembled 50S ribosomal subunit. This Wigglesworthia glossinidia brevipalpis protein is Ribosomal RNA large subunit methyltransferase E.